The chain runs to 559 residues: Glucose-6-phosphate isomerase (559 aa).

Residue Glu-363 is the Proton donor of the active site. Residues His-394 and Lys-523 contribute to the active site.

This sequence belongs to the GPI family.

The protein localises to the cytoplasm. It carries out the reaction alpha-D-glucose 6-phosphate = beta-D-fructose 6-phosphate. The protein operates within carbohydrate biosynthesis; gluconeogenesis. Its pathway is carbohydrate degradation; glycolysis; D-glyceraldehyde 3-phosphate and glycerone phosphate from D-glucose: step 2/4. Functionally, catalyzes the reversible isomerization of glucose-6-phosphate to fructose-6-phosphate. The sequence is that of Glucose-6-phosphate isomerase from Bartonella henselae (strain ATCC 49882 / DSM 28221 / CCUG 30454 / Houston 1) (Rochalimaea henselae).